The following is a 108-amino-acid chain: Ig kappa chain V region BS-5 (108 aa).

The segment at 1–23 (DVVMTQTPASVSEPVGGTVTIKC) is framework-1. Disulfide bonds link C23–C88 and C80–G108. The interval 24–34 (QASQSIYSNLA) is complementarity-determining-1. The tract at residues 35–49 (WYQZKPGQPPKLLIY) is framework-2. The segment at 50-56 (KASTLES) is complementarity-determining-2. The segment at 57–88 (GVPSRFKGSGSGTDFTLTISDLECADAATYFC) is framework-3. The interval 89–97 (QGSBYTGTV) is complementarity-determining-3. Residues 98-107 (FGGGTEVVVK) are framework-4.

The polypeptide is Ig kappa chain V region BS-5 (Oryctolagus cuniculus (Rabbit)).